Here is a 459-residue protein sequence, read N- to C-terminus: MDEAGSPAPAGTGGGDDPGGSTRETSRRLSREQIFVLVSAASMNLGCMMTYSILGPFFPKEAEKKGASNTMIGMIFGCYALFELLASLVFGKYLVHIGAKFMFIAGMFVSGGVTILFGVLDQLPEGPIFIAMCFLVRIVDAIGFGAAITASSSILAKAFPNNVATVMGSLEVFSGLGLVAGPPLGGLLYQSFGYEVPFIFLGCIVLLMIPLNLYILPSYAQESDPGKQSFWKLVTLPKMGLLAFVIISLSSCFGFLDPTLSLFVMEKFSLSTGYVGLVFLGLSLSYAISSPLFGLLSDKMPTLRKWLLVFGNLITAGCYMLLGPVPLLHIKSQLWLLVLVLVVNGISAGMSIIPTFPEMLSCAYANGFEDSISTLGLVSGLFGAMWSVGAFMGPILGGFLCEKIGFEWAAAMQGLWTLLSGVSMALFYLWEDSTARRRSKAQNSLGTEEERAALLPNDT.

M1 carries the post-translational modification N-acetylmethionine. Positions 1–10 (MDEAGSPAPA) are enriched in low complexity. The tract at residues 1 to 27 (MDEAGSPAPAGTGGGDDPGGSTRETSR) is disordered. The Cytoplasmic portion of the chain corresponds to 1–33 (MDEAGSPAPAGTGGGDDPGGSTRETSRRLSREQ). S21 carries the post-translational modification Phosphoserine. A helical transmembrane segment spans residues 34–54 (IFVLVSAASMNLGCMMTYSIL). Residues 55 to 70 (GPFFPKEAEKKGASNT) are Extracellular-facing. The chain crosses the membrane as a helical span at residues 71–91 (MIGMIFGCYALFELLASLVFG). Over 92 to 100 (KYLVHIGAK) the chain is Cytoplasmic. The chain crosses the membrane as a helical span at residues 101–121 (FMFIAGMFVSGGVTILFGVLD). Over 122–127 (QLPEGP) the chain is Extracellular. The chain crosses the membrane as a helical span at residues 128 to 148 (IFIAMCFLVRIVDAIGFGAAI). The Cytoplasmic portion of the chain corresponds to 149–167 (TASSSILAKAFPNNVATVM). The helical transmembrane segment at 168–188 (GSLEVFSGLGLVAGPPLGGLL) threads the bilayer. At 189–195 (YQSFGYE) the chain is on the extracellular side. The chain crosses the membrane as a helical span at residues 196–216 (VPFIFLGCIVLLMIPLNLYIL). Over 217–235 (PSYAQESDPGKQSFWKLVT) the chain is Cytoplasmic. A helical transmembrane segment spans residues 236 to 256 (LPKMGLLAFVIISLSSCFGFL). At 257-274 (DPTLSLFVMEKFSLSTGY) the chain is on the extracellular side. Residues 275–295 (VGLVFLGLSLSYAISSPLFGL) traverse the membrane as a helical segment. Over 296 to 306 (LSDKMPTLRKW) the chain is Cytoplasmic. Residues 307 to 327 (LLVFGNLITAGCYMLLGPVPL) form a helical membrane-spanning segment. Topologically, residues 328 to 333 (LHIKSQ) are extracellular. The helical transmembrane segment at 334–354 (LWLLVLVLVVNGISAGMSIIP) threads the bilayer. The Cytoplasmic portion of the chain corresponds to 355–379 (TFPEMLSCAYANGFEDSISTLGLVS). A helical membrane pass occupies residues 380-400 (GLFGAMWSVGAFMGPILGGFL). The Extracellular portion of the chain corresponds to 401 to 409 (CEKIGFEWA). A helical transmembrane segment spans residues 410-430 (AAMQGLWTLLSGVSMALFYLW). Over 431-459 (EDSTARRRSKAQNSLGTEEERAALLPNDT) the chain is Cytoplasmic. Positions 440-459 (KAQNSLGTEEERAALLPNDT) are disordered.

This sequence belongs to the major facilitator superfamily. Widely expressed, with highest expression in the lung, pancreas and kidney. High expression in the CNS, particularly in the hypothalamus, the thalamus and the cerebellum. In the forebrain, abundantly expressed in the telencephalon, especially in the cerebral cortex layers, except layer 1, as well as in the induseum griseum, the piriform area, the taenia tecta, dorsal part and in the entorhinal area, lateral part. Lower levels in the bed anterior olfactory nucleus, posteroventral part and in layer two of the olfactory tubercle. In the amygdala, high levels observed in the intercalated nucleus and the medial nucleus. In the diencephalon, expressed in the nuclei in both the hypothalamus and thalamus. Among the hypothalamic areas, strongest expression in the arcuate nucleus and in the ventromedial nucleus, as well as in the suprachiasmatic nucleus, anterior nucleus, especially in its central part, and in the magnocellular division of the paraventricular nucleus. In the thalamus, highest levels in the medial habenula. Expression also observed in the paraventricular thalamic nucleus, parataenial nucleus, central medial nucleus, intermediodorsal nucleus and lateral dorsal nucleus. In the hindbrain, detected in the cerebellum and in the pons. In the midbrain and the medulla, expression levels were modest. In the midbrain, highest expression in the periaqueductal gray and all subdivisions of the interpeduncular nucleus, except for the caudal part. In the pons, the strongest labeling was seen in the nucleus incertus and in the tegmental nucleus. Expressed in bone marrow-derived mast cells (at protein level).

It is found in the cytoplasmic vesicle. The protein localises to the secretory vesicle membrane. The protein resides in the secretory vesicle. Its subcellular location is the synaptic vesicle membrane. The catalysed reaction is spermine(in) + n H(+)(out) = spermine(out) + n H(+)(in). It carries out the reaction spermidine(in) + n H(+)(out) = spermidine(out) + n H(+)(in). The enzyme catalyses serotonin(in) + n H(+)(out) = serotonin(out) + n H(+)(in). Its function is as follows. Proton-coupled polyamine antiporter involved in the translocation of polyamines from cytosol into secretory vesicles prior to their release via exocytosis. Uses the electrochemical proton gradient generated by a V-type proton-pumping ATPase to couple the efflux of protons with the uptake of a polyamine molecule. Facilitates vesicular storage of spermine and spermidine in astrocytes with an impact on glutamatergic neuronal transmission and memory formation. Upon antigen stimulation, regulates polyamine accumulation and release in mast cell secretory granules, which in turn potentiates mast cell degranulation and histamine secretion. This chain is MFS-type transporter SLC18B1, found in Mus musculus (Mouse).